The chain runs to 282 residues: Phosphatidylserine decarboxylase proenzyme (282 aa).

Residues aspartate 88, histidine 145, and serine 248 each act as charge relay system; for autoendoproteolytic cleavage activity in the active site. The active-site Schiff-base intermediate with substrate; via pyruvic acid; for decarboxylase activity is the serine 248. Serine 248 bears the Pyruvic acid (Ser); by autocatalysis mark.

Belongs to the phosphatidylserine decarboxylase family. PSD-B subfamily. Prokaryotic type I sub-subfamily. In terms of assembly, heterodimer of a large membrane-associated beta subunit and a small pyruvoyl-containing alpha subunit. The cofactor is pyruvate. Post-translationally, is synthesized initially as an inactive proenzyme. Formation of the active enzyme involves a self-maturation process in which the active site pyruvoyl group is generated from an internal serine residue via an autocatalytic post-translational modification. Two non-identical subunits are generated from the proenzyme in this reaction, and the pyruvate is formed at the N-terminus of the alpha chain, which is derived from the carboxyl end of the proenzyme. The autoendoproteolytic cleavage occurs by a canonical serine protease mechanism, in which the side chain hydroxyl group of the serine supplies its oxygen atom to form the C-terminus of the beta chain, while the remainder of the serine residue undergoes an oxidative deamination to produce ammonia and the pyruvoyl prosthetic group on the alpha chain. During this reaction, the Ser that is part of the protease active site of the proenzyme becomes the pyruvoyl prosthetic group, which constitutes an essential element of the active site of the mature decarboxylase.

Its subcellular location is the cell membrane. It catalyses the reaction a 1,2-diacyl-sn-glycero-3-phospho-L-serine + H(+) = a 1,2-diacyl-sn-glycero-3-phosphoethanolamine + CO2. It participates in phospholipid metabolism; phosphatidylethanolamine biosynthesis; phosphatidylethanolamine from CDP-diacylglycerol: step 2/2. Its function is as follows. Catalyzes the formation of phosphatidylethanolamine (PtdEtn) from phosphatidylserine (PtdSer). This chain is Phosphatidylserine decarboxylase proenzyme, found in Dechloromonas aromatica (strain RCB).